A 1257-amino-acid chain; its full sequence is uncharacterized protein (1257 aa).

Residues 1-26 (MNFSNKPNKSRKKSNRKNKKSNKSNT) form a disordered region. The span at 8-22 (NKSRKKSNRKNKKSN) shows a compositional bias: basic residues.

It localises to the virion. This is an uncharacterized protein from Acanthamoeba polyphaga mimivirus (APMV).